The chain runs to 249 residues: Aspartate/glutamate leucyltransferase (249 aa).

This sequence belongs to the R-transferase family. Bpt subfamily.

The protein resides in the cytoplasm. The enzyme catalyses N-terminal L-glutamyl-[protein] + L-leucyl-tRNA(Leu) = N-terminal L-leucyl-L-glutamyl-[protein] + tRNA(Leu) + H(+). It catalyses the reaction N-terminal L-aspartyl-[protein] + L-leucyl-tRNA(Leu) = N-terminal L-leucyl-L-aspartyl-[protein] + tRNA(Leu) + H(+). Functionally, functions in the N-end rule pathway of protein degradation where it conjugates Leu from its aminoacyl-tRNA to the N-termini of proteins containing an N-terminal aspartate or glutamate. The sequence is that of Aspartate/glutamate leucyltransferase from Brucella canis (strain ATCC 23365 / NCTC 10854 / RM-666).